Consider the following 241-residue polypeptide: Chaperone protein FimC (241 aa).

Residues 1 to 36 form the signal peptide; sequence MSNKNVNVRKSQEITFCLLAGILMFMAMMVAGRAEA.

Belongs to the periplasmic pilus chaperone family.

The protein resides in the periplasm. In terms of biological role, required for the biogenesis of type 1 fimbriae. Binds and interact with FimH. The polypeptide is Chaperone protein FimC (fimC) (Escherichia coli (strain K12)).